Consider the following 201-residue polypeptide: Ras-related protein Rab-9A (201 aa).

Residue A2 is modified to N-acetylalanine. GTP contacts are provided by G17, V18, G19, K20, S21, S22, S34, H38, and T39. Residue S21 participates in Mg(2+) binding. Residues K31 to V42 carry the Switch 1 motif. S34 bears the Phosphoserine mark. 2 residues coordinate Mg(2+): T39 and D62. Positions A64 to R78 match the Switch 2 motif. The GTP site is built by G65, N124, K125, D127, and K156. The residue at position 179 (S179) is a Phosphoserine. Phosphothreonine is present on T187. Residues C200 and C201 are each lipidated (S-geranylgeranyl cysteine).

The protein belongs to the small GTPase superfamily. Rab family. Interacts (preferentially in its GTP-bound form) with GCC2 (via its GRIP domain). Interacts (GTP-bound form) with SGSM1; the GDP-bound form has much lower affinity for SGSM1. Interacts with SGSM2. The GTP-bound form but not the GDP-bound form interacts with HPS4 and the BLOC-3 complex (heterodimer of HPS1 and HPS4) but does not interact with HPS1 alone. Interacts (GTP-bound form) with NDE1; two RAB9A-GTP molecules lie on the opposite sides of the NDE1 homodimer; the interaction leads to RAB9A-dynein motor tethering. Interacts (GTP-bound form) with NDEL1. It depends on Mg(2+) as a cofactor.

Its subcellular location is the cell membrane. It localises to the endoplasmic reticulum membrane. The protein localises to the golgi apparatus membrane. The protein resides in the late endosome. It is found in the cytoplasmic vesicle. Its subcellular location is the phagosome membrane. It localises to the phagosome. The protein localises to the cytoplasmic vesicle membrane. The protein resides in the melanosome. It carries out the reaction GTP + H2O = GDP + phosphate + H(+). Its activity is regulated as follows. Regulated by guanine nucleotide exchange factors (GEFs) which promote the exchange of bound GDP for free GTP. Regulated by GTPase activating proteins (GAPs) which increase the GTP hydrolysis activity. Inhibited by GDP dissociation inhibitors (GDIs). Its function is as follows. The small GTPases Rab are key regulators of intracellular membrane trafficking, from the formation of transport vesicles to their fusion with membranes. Rabs cycle between an inactive GDP-bound form and an active GTP-bound form that is able to recruit to membranes different sets of downstream effectors directly responsible for vesicle formation, movement, tethering and fusion. RAB9A is involved in the transport of proteins between the endosomes and the trans-Golgi network (TGN). Specifically uses NDE1/NDEL1 as an effector to interact with the dynein motor complex in order to control retrograde trafficking of RAB9-associated late endosomes to the TGN. Involved in the recruitment of SGSM2 to melanosomes and is required for the proper trafficking of melanogenic enzymes TYR, TYRP1 and DCT/TYRP2 to melanosomes in melanocytes. The polypeptide is Ras-related protein Rab-9A (Rattus norvegicus (Rat)).